We begin with the raw amino-acid sequence, 96 residues long: Probable quinol oxidase subunit 4 (96 aa).

Transmembrane regions (helical) follow at residues 8 to 28 (TVGF…TLYT), 36 to 56 (ITII…MFMH), and 68 to 88 (FKVL…YWVM).

It belongs to the cytochrome c oxidase bacterial subunit 4 family.

Its subcellular location is the cell membrane. The catalysed reaction is 2 a quinol + O2 = 2 a quinone + 2 H2O. Functionally, catalyzes quinol oxidation with the concomitant reduction of oxygen to water. In Staphylococcus saprophyticus subsp. saprophyticus (strain ATCC 15305 / DSM 20229 / NCIMB 8711 / NCTC 7292 / S-41), this protein is Probable quinol oxidase subunit 4 (qoxD).